Consider the following 342-residue polypeptide: Mitogen-activated protein kinase kinase kinase 20 (342 aa).

Residues tryptophan 3–valine 268 form the Protein kinase domain. Position 9–17 (isoleucine 9–valine 17) interacts with ATP. Residue serine 18 is modified to Phosphoserine. Threonine 19 is subject to Phosphothreonine. Lysine 36 contributes to the ATP binding site. Tyrosine 41 and tyrosine 66 each carry phosphotyrosine. 2 positions are modified to phosphoserine: serine 93 and serine 114. The Proton acceptor role is filled by aspartate 131. Residues lysine 285 to arginine 342 are required for MKK3 binding.

It belongs to the protein kinase superfamily. Ser/Thr protein kinase family. As to quaternary structure, interacts with MKK3 and MPK18 via its C-terminal domain. Binds to MKK5. In terms of processing, autophosphorylates; active in phosphorylated state. Dephosphorylated by ABI1. As to expression, expressed in roots, seedlings, leaves, flower buds, flowers and siliques.

The protein localises to the nucleus. It is found in the cytoplasm. The catalysed reaction is L-seryl-[protein] + ATP = O-phospho-L-seryl-[protein] + ADP + H(+). The enzyme catalyses L-threonyl-[protein] + ATP = O-phospho-L-threonyl-[protein] + ADP + H(+). With respect to regulation, activated through serine, threonine and tyrosine phosphorylation, especially upon abscisic acid (ABA) treatment. Restricted activity by ABI1-mediated dephosphorylation. Functionally, mitogen-activated protein kinase kinase (MAPKK) that phosphorylates both MKK3 and MPK18 and regulate two separate signaling pathways involved in root microtubule functions. MAPKK which regulates abscisic acid (ABA) responses in a MAPKKK20-MKK5-MPK6 cascade involved in root growth (e.g. root cell division and elongation) and stomatal response, probably via MKK5 activation by protein phosphorylation and subsequent activation of MAPK6 by MKK5. Involved in various abiotic stresses (e.g. osmotic stress, cold and hydrogen peroxide) responses by phosphorylating and thus regulating MPK6 activity, in an ABA-independent manner. This Arabidopsis thaliana (Mouse-ear cress) protein is Mitogen-activated protein kinase kinase kinase 20.